Reading from the N-terminus, the 377-residue chain is N5-carboxyaminoimidazole ribonucleotide synthase (377 aa).

Residues Arg93, Lys133, 138-144 (GYDGKGQ), 175-178 (EEFV), Glu183, His206, and 257-258 (NE) each bind ATP. In terms of domain architecture, ATP-grasp spans 97 to 287 (KALLDHAGVR…QFENHLRAVC (191 aa)).

Belongs to the PurK/PurT family. Homodimer.

The enzyme catalyses 5-amino-1-(5-phospho-beta-D-ribosyl)imidazole + hydrogencarbonate + ATP = 5-carboxyamino-1-(5-phospho-D-ribosyl)imidazole + ADP + phosphate + 2 H(+). It participates in purine metabolism; IMP biosynthesis via de novo pathway; 5-amino-1-(5-phospho-D-ribosyl)imidazole-4-carboxylate from 5-amino-1-(5-phospho-D-ribosyl)imidazole (N5-CAIR route): step 1/2. Functionally, catalyzes the ATP-dependent conversion of 5-aminoimidazole ribonucleotide (AIR) and HCO(3)(-) to N5-carboxyaminoimidazole ribonucleotide (N5-CAIR). In Vibrio vulnificus (strain CMCP6), this protein is N5-carboxyaminoimidazole ribonucleotide synthase.